We begin with the raw amino-acid sequence, 382 residues long: Cytochrome b (382 aa).

Helical transmembrane passes span 28 to 48 (YGFL…FLAS), 72 to 94 (WCFR…LHIL), 107 to 127 (SWIS…IGYV), and 169 to 189 (FFVL…IHIF). Positions 78 and 92 each coordinate heme b. The heme b site is built by His-173 and His-187. His-192 is a binding site for a ubiquinone. Transmembrane regions (helical) follow at residues 214-234 (LLSL…LQSI), 274-294 (IPSK…LFLL), 317-337 (VPMI…CQLP), and 340-360 (IFIL…LFAL).

Belongs to the cytochrome b family. In terms of assembly, the main subunits of complex b-c1 are: cytochrome b, cytochrome c1 and the Rieske protein. It depends on heme b as a cofactor.

It is found in the mitochondrion inner membrane. In terms of biological role, component of the ubiquinol-cytochrome c reductase complex (complex III or cytochrome b-c1 complex) that is part of the mitochondrial respiratory chain. The b-c1 complex mediates electron transfer from ubiquinol to cytochrome c. Contributes to the generation of a proton gradient across the mitochondrial membrane that is then used for ATP synthesis. This chain is Cytochrome b (MT-CYB), found in Plasmodium vivax (strain Salvador I).